Here is a 689-residue protein sequence, read N- to C-terminus: Glycine--tRNA ligase beta subunit (689 aa).

It belongs to the class-II aminoacyl-tRNA synthetase family. In terms of assembly, tetramer of two alpha and two beta subunits.

Its subcellular location is the cytoplasm. It carries out the reaction tRNA(Gly) + glycine + ATP = glycyl-tRNA(Gly) + AMP + diphosphate. The sequence is that of Glycine--tRNA ligase beta subunit from Dichelobacter nodosus (strain VCS1703A).